A 403-amino-acid polypeptide reads, in one-letter code: Peroxisomal membrane protein PEX13 (403 aa).

Residues 1–11 show a composition bias toward pro residues; the sequence is MASQPPPPPKP. The disordered stretch occupies residues 1–69; the sequence is MASQPPPPPK…SQQTGGNNVN (69 aa). The Peroxisomal matrix segment spans residues 1–134; sequence MASQPPPPPK…SSRGAFQSIE (134 aa). The segment covering 59–69 has biased composition (polar residues); that stretch reads PSQQTGGNNVN. A helical transmembrane segment spans residues 135–155; it reads SIVHAFASVSMMMDATFSAVY. Positions 145-233 are targeting to peroxisomes; sequence MMMDATFSAV…EDQANNSAKS (89 aa). Residues 156–174 lie on the Cytoplasmic side of the membrane; the sequence is NSFRAVLDVANHFSRLKIH. A helical membrane pass occupies residues 175 to 192; it reads FTKVFSAFALVRTIRYLY. The interaction with PEX19 stretch occupies residues 175–196; the sequence is FTKVFSAFALVRTIRYLYRRLQ. The Peroxisomal matrix segment spans residues 193 to 233; it reads RRLQWMMGLRRGSENEDLWAESEGTVACLGAEDQANNSAKS. A helical membrane pass occupies residues 234 to 254; that stretch reads WPIFLFFAVILGGPYLIWKLL. At 255–403 the chain is on the cytoplasmic side; sequence STHSDEVTDS…TGKNGDKQDL (149 aa). One can recognise an SH3 domain in the interval 272 to 336; sequence DDHVVARAEY…PANYVKILGK (65 aa). Disordered regions lie at residues 341-364 and 381-403; these read KTVE…VKGV and FVET…KQDL. The span at 344 to 364 shows a compositional bias: polar residues; the sequence is ESSTMPKQQQSFTNPTSVKGV.

The protein belongs to the peroxin-13 family. Interacts (via SH3 domain) with PEX14 (via SH3-binding motif); forming the PEX13-PEX14 docking complex. Interacts with PEX19.

The protein resides in the peroxisome membrane. Functionally, component of the PEX13-PEX14 docking complex, a translocon channel that specifically mediates the import of peroxisomal cargo proteins bound to PEX5 receptor. The PEX13-PEX14 docking complex forms a large import pore which can be opened to a diameter of about 9 nm. Mechanistically, PEX5 receptor along with cargo proteins associates with the PEX14 subunit of the PEX13-PEX14 docking complex in the cytosol, leading to the insertion of the receptor into the organelle membrane with the concomitant translocation of the cargo into the peroxisome matrix. Involved in the import of PTS1- and PTS2-type containing proteins. This chain is Peroxisomal membrane protein PEX13, found in Rattus norvegicus (Rat).